The following is a 77-amino-acid chain: Conotoxin ArMKLT2-0322 (77 aa).

The N-terminal stretch at 1-22 (MKLTCVLIIAVLFLIVCQLNTA) is a signal peptide. A propeptide spanning residues 23–47 (DDSRDKQEYRAVRLRDAIRNSRGSR) is cleaved from the precursor. 3 disulfide bridges follow: Cys-49-Cys-62, Cys-56-Cys-67, and Cys-61-Cys-74.

Belongs to the conotoxin O1 superfamily. In terms of tissue distribution, expressed by the venom duct.

Its subcellular location is the secreted. The sequence is that of Conotoxin ArMKLT2-0322 from Conus arenatus (Sand-dusted cone).